The sequence spans 263 residues: Oxidoreductase UcpA (263 aa).

10 to 32 is a binding site for NAD(+); that stretch reads LITGALQGIGEGIARTFARHGAN. Ser141 provides a ligand contact to substrate. The active-site Proton acceptor is the Tyr155.

It belongs to the short-chain dehydrogenases/reductases (SDR) family.

The polypeptide is Oxidoreductase UcpA (ucpA) (Escherichia coli (strain K12)).